A 439-amino-acid chain; its full sequence is Casein kinase I homolog 3 (439 aa).

A Protein kinase domain is found at Tyr-15–Leu-286. ATP contacts are provided by residues Ile-21–Leu-29 and Lys-44. Asp-134 functions as the Proton acceptor in the catalytic mechanism. Residues Asp-366–Phe-426 form a disordered region. Residues Ala-372–Ala-413 show a composition bias toward low complexity.

This sequence belongs to the protein kinase superfamily. CK1 Ser/Thr protein kinase family. Casein kinase I subfamily.

Its subcellular location is the cytoplasm. It catalyses the reaction L-seryl-[protein] + ATP = O-phospho-L-seryl-[protein] + ADP + H(+). The enzyme catalyses L-threonyl-[protein] + ATP = O-phospho-L-threonyl-[protein] + ADP + H(+). Its function is as follows. Casein kinases are operationally defined by their preferential utilization of acidic proteins such as caseins as substrates. The polypeptide is Casein kinase I homolog 3 (cki3) (Schizosaccharomyces pombe (strain 972 / ATCC 24843) (Fission yeast)).